The chain runs to 212 residues: Placenta-specific protein 1 (212 aa).

Residues 1–22 form the signal peptide; the sequence is MKVFKFIGLMILLTSAFSAGSG.

It belongs to the PLAC1 family. Expressed in placenta. Localizes primarily to differentiated syncytiotrophoblast throughout gestation as well as to a small population of villous cytotrophoblasts. Also detected in maternal blood and rapidly disappears following delivery, but is not detected in other adult or fetal tissues examined.

The protein localises to the secreted. Functionally, may play a role in placental development. This Homo sapiens (Human) protein is Placenta-specific protein 1.